The primary structure comprises 291 residues: Protease HtpX (291 aa).

2 helical membrane passes run 4 to 24 (IILF…ILSF) and 32 to 52 (ISGL…ISLL). His-139 serves as a coordination point for Zn(2+). Glu-140 is an active-site residue. Residue His-143 coordinates Zn(2+). A run of 2 helical transmembrane segments spans residues 158-178 (IVNT…SSIL) and 192-212 (WVYI…ASII). Glu-221 is a Zn(2+) binding site.

Belongs to the peptidase M48B family. Zn(2+) is required as a cofactor.

It is found in the cell membrane. The polypeptide is Protease HtpX (Buchnera aphidicola subsp. Baizongia pistaciae (strain Bp)).